The chain runs to 378 residues: Ubiquitin-conjugating enzyme E2 Q2 (378 aa).

The segment at 126 to 152 (DQPLPTGQNGTTEEVTSEEEEEEEMAE) is disordered. The segment covering 140-152 (VTSEEEEEEEMAE) has biased composition (acidic residues). Residues 207-371 (QASDRLMKEL…VQIHEKNGWY (165 aa)) form the UBC core domain. Residue Cys-307 is the Glycyl thioester intermediate of the active site.

This sequence belongs to the ubiquitin-conjugating enzyme family. In terms of processing, auto-ubiquitinated in vitro.

The protein resides in the cytoplasm. It carries out the reaction S-ubiquitinyl-[E1 ubiquitin-activating enzyme]-L-cysteine + [E2 ubiquitin-conjugating enzyme]-L-cysteine = [E1 ubiquitin-activating enzyme]-L-cysteine + S-ubiquitinyl-[E2 ubiquitin-conjugating enzyme]-L-cysteine.. The protein operates within protein modification; protein ubiquitination. Accepts ubiquitin from the E1 complex and catalyzes its covalent attachment to other proteins. In vitro catalyzes 'Lys-48'-linked polyubiquitination. The chain is Ubiquitin-conjugating enzyme E2 Q2 (Ube2q2) from Mus musculus (Mouse).